The primary structure comprises 199 residues: Single-stranded DNA-binding protein 2 (199 aa).

In terms of domain architecture, SSB spans 1–110 (MAGETVITVV…LDVDEVGASL (110 aa)). A disordered region spans residues 114 to 199 (TAKVTKTSGQ…GGGYSDEPPF (86 aa)). The span at 123 to 156 (QGRGGQGGYGGGGGGQGGGGWGGGPGGGQQGGGA) shows a compositional bias: gly residues. Residues 157 to 166 (PADDPWATGG) show a composition bias toward low complexity. A compositionally biased stretch (gly residues) spans 167–193 (APAGGQQGGGGQGGGGWGGGSGGGGGY).

In terms of assembly, homotetramer. In terms of processing, phosphorylated on tyrosine residue(s) when expressed in E.coli.

The protein resides in the cytoplasm. The protein localises to the nucleoid. In Streptomyces coelicolor (strain ATCC BAA-471 / A3(2) / M145), this protein is Single-stranded DNA-binding protein 2 (ssb2).